The sequence spans 315 residues: Mannose-6-phosphate isomerase ManA (315 aa).

Zn(2+) contacts are provided by H97, E115, and H172. The active site involves R192.

The protein belongs to the mannose-6-phosphate isomerase type 1 family. The cofactor is Zn(2+).

The enzyme catalyses D-mannose 6-phosphate = D-fructose 6-phosphate. The protein is Mannose-6-phosphate isomerase ManA (manA) of Bacillus subtilis (strain 168).